A 267-amino-acid polypeptide reads, in one-letter code: Indole-3-glycerol phosphate synthase (267 aa).

The protein belongs to the TrpC family.

It carries out the reaction 1-(2-carboxyphenylamino)-1-deoxy-D-ribulose 5-phosphate + H(+) = (1S,2R)-1-C-(indol-3-yl)glycerol 3-phosphate + CO2 + H2O. It functions in the pathway amino-acid biosynthesis; L-tryptophan biosynthesis; L-tryptophan from chorismate: step 4/5. This Cupriavidus taiwanensis (strain DSM 17343 / BCRC 17206 / CCUG 44338 / CIP 107171 / LMG 19424 / R1) (Ralstonia taiwanensis (strain LMG 19424)) protein is Indole-3-glycerol phosphate synthase.